A 182-amino-acid polypeptide reads, in one-letter code: Protein YIPF6 homolog (182 aa).

The Cytoplasmic portion of the chain corresponds to 1 to 45; the sequence is MIESENPNTLDEPVIQTILRDLKMIGFKLYHVILPRGNAANVLRD. The chain crosses the membrane as a helical span at residues 46-66; the sequence is WDLWGPLILCLVMAIFLSISA. The Lumenal portion of the chain corresponds to 67 to 70; the sequence is EEQK. A helical transmembrane segment spans residues 71–91; that stretch reads ALEFTIVFVVVWCGAAIVTVN. Over 92 to 104 the chain is Cytoplasmic; sequence GQLLCGNISFFQS. Residues 105-125 traverse the membrane as a helical segment; sequence VCILGYCIFPLTIATIIIWII. At 126–133 the chain is on the lumenal side; it reads QNFTMIVK. Residues 134–154 form a helical membrane-spanning segment; that stretch reads LPIVGGAWFWSSFASYGFLGS. Residues 155–161 lie on the Cytoplasmic side of the membrane; sequence SVPESRR. The helical transmembrane segment at 162–182 threads the bilayer; sequence LLAVYPVLLFYLVIAWLVVVQ.

It belongs to the YIP1 family.

Its subcellular location is the golgi apparatus membrane. In Dictyostelium discoideum (Social amoeba), this protein is Protein YIPF6 homolog (yipf6).